A 119-amino-acid polypeptide reads, in one-letter code: MLHWGPKYWRALHLYAIFFSDAPGWKEKYEAIQWILNFIESLPCTRCRHHAFSYLTKNPLTLNNSEDFQYWTFAFHNNVNNRLNKKIISWSEYKNIYEQSILKTIEYGKTDFIGAWSSL.

The ERV/ALR sulfhydryl oxidase domain maps to 1–97 (MLHWGPKYWR…ISWSEYKNIY (97 aa)). Residues C44 and C47 are joined by a disulfide bond.

This sequence belongs to the asfivirus B119L family. In terms of assembly, interacts with A151R. The cofactor is FAD.

Its subcellular location is the host cytoplasm. It localises to the virion. It catalyses the reaction 2 R'C(R)SH + O2 = R'C(R)S-S(R)CR' + H2O2. FAD-dependent sulfhydryl oxidase that catalyzes the formation of disulfide bonds in viral proteins produced in the cell cytoplasm. Involved in virion maturation. This is FAD-linked sulfhydryl oxidase from African swine fever virus (isolate Warthog/Namibia/Wart80/1980) (ASFV).